The sequence spans 193 residues: Peptidyl-tRNA hydrolase (193 aa).

Position 16 (tyrosine 16) interacts with tRNA. The active-site Proton acceptor is the histidine 21. Residues phenylalanine 66, asparagine 68, and asparagine 114 each contribute to the tRNA site.

This sequence belongs to the PTH family. As to quaternary structure, monomer.

It is found in the cytoplasm. It carries out the reaction an N-acyl-L-alpha-aminoacyl-tRNA + H2O = an N-acyl-L-amino acid + a tRNA + H(+). In terms of biological role, hydrolyzes ribosome-free peptidyl-tRNAs (with 1 or more amino acids incorporated), which drop off the ribosome during protein synthesis, or as a result of ribosome stalling. Functionally, catalyzes the release of premature peptidyl moieties from peptidyl-tRNA molecules trapped in stalled 50S ribosomal subunits, and thus maintains levels of free tRNAs and 50S ribosomes. The polypeptide is Peptidyl-tRNA hydrolase (Trichlorobacter lovleyi (strain ATCC BAA-1151 / DSM 17278 / SZ) (Geobacter lovleyi)).